The following is a 187-amino-acid chain: Large ribosomal subunit protein uL10 (187 aa).

The protein belongs to the universal ribosomal protein uL10 family. Part of the ribosomal stalk of the 50S ribosomal subunit. The N-terminus interacts with L11 and the large rRNA to form the base of the stalk. The C-terminus forms an elongated spine to which L12 dimers bind in a sequential fashion forming a multimeric L10(L12)X complex.

Functionally, forms part of the ribosomal stalk, playing a central role in the interaction of the ribosome with GTP-bound translation factors. This Synechococcus sp. (strain JA-2-3B'a(2-13)) (Cyanobacteria bacterium Yellowstone B-Prime) protein is Large ribosomal subunit protein uL10.